The chain runs to 514 residues: Type-2 serine--tRNA ligase (514 aa).

Ala-313 serves as a coordination point for L-serine. Residue Cys-315 participates in Zn(2+) binding. Arg-344 lines the L-serine pocket. Residues 344 to 346 (RWE) and 355 to 356 (RV) contribute to the ATP site. 361–363 (RGE) provides a ligand contact to L-serine. Zn(2+) is bound by residues Glu-363 and Cys-470. Arg-477 is an ATP binding site.

This sequence belongs to the class-II aminoacyl-tRNA synthetase family. Type-2 seryl-tRNA synthetase subfamily. As to quaternary structure, homodimer. Requires Zn(2+) as cofactor.

It localises to the cytoplasm. It carries out the reaction tRNA(Ser) + L-serine + ATP = L-seryl-tRNA(Ser) + AMP + diphosphate + H(+). The catalysed reaction is tRNA(Sec) + L-serine + ATP = L-seryl-tRNA(Sec) + AMP + diphosphate + H(+). It participates in aminoacyl-tRNA biosynthesis; selenocysteinyl-tRNA(Sec) biosynthesis; L-seryl-tRNA(Sec) from L-serine and tRNA(Sec): step 1/1. In terms of biological role, catalyzes the attachment of serine to tRNA(Ser). Is also able to aminoacylate tRNA(Sec) with serine, to form the misacylated tRNA L-seryl-tRNA(Sec), which will be further converted into selenocysteinyl-tRNA(Sec). The sequence is that of Type-2 serine--tRNA ligase from Methanococcus maripaludis (strain C7 / ATCC BAA-1331).